Consider the following 68-residue polypeptide: Palustrin-1c (68 aa).

Residues 1-22 (MFTMKKSLLLLFFLGTISLSLC) form the signal peptide. A propeptide spanning residues 23-39 (EEERGADEEEGDGEKLT) is cleaved from the precursor. The cysteines at positions 62 and 68 are disulfide-linked.

In terms of tissue distribution, expressed by the skin glands.

The protein localises to the secreted. Antimicrobial peptide. The sequence is that of Palustrin-1c from Odorrana versabilis (Chinese bamboo leaf odorous frog).